Reading from the N-terminus, the 400-residue chain is Leukosialin (400 aa).

An N-terminal signal peptide occupies residues 1–19 (MATLLLLLGVLVVSPDALG). Residues 20 to 253 (STTAVQTPTS…PFRNPDENSR (234 aa)) are Extracellular-facing. Threonine 21, threonine 22, threonine 26, and threonine 28 each carry an O-linked (GalNAc...) threonine glycan. 2 stretches are compositionally biased toward polar residues: residues 21–51 (TTAV…SITS) and 58–112 (TGDQ…TPHA). A disordered region spans residues 21-224 (TTAVQTPTSG…SSGASGPQVS (204 aa)). O-linked (GalNAc...) serine glycosylation is found at serine 29 and serine 35. Threonine 36 carries O-linked (GalNAc...) threonine glycosylation. O-linked (GalNAc...) serine glycans are attached at residues serine 37, serine 41, and serine 42. 2 O-linked (GalNAc...) threonine glycosylation sites follow: threonine 46 and threonine 47. Serine 48 carries O-linked (GalNAc...) serine glycosylation. Threonine 50, threonine 58, and threonine 69 each carry an O-linked (GalNAc...) threonine glycan. O-linked (GalNAc...) serine glycosylation is found at serine 99 and serine 103. O-linked (GalNAc...) threonine glycans are attached at residues threonine 109 and threonine 113. Residue serine 114 is glycosylated (O-linked (GalNAc...) serine). 2 stretches are compositionally biased toward polar residues: residues 121–164 (TANS…SRGT) and 172–182 (ATVSLETSKGT). O-linked (GalNAc...) threonine glycans are attached at residues threonine 136, threonine 137, threonine 173, and threonine 178. Residues 196-211 (TSTGTTGPPVTMTTGS) show a composition bias toward low complexity. Over residues 212-224 (LEPSSGASGPQVS) the composition is skewed to polar residues. An N-linked (GlcNAc...) asparagine glycan is attached at asparagine 239. Residues 254-276 (GMLPVAVLVALLAVIVLVALLLL) traverse the membrane as a helical segment. Residues 277 to 400 (WRRRQKRRTG…EPEGGDGAAP (124 aa)) are Cytoplasmic-facing. Positions 278-308 (RRRQKRRTGALVLSRGGKRNGVVDAWAGPAQ) are required for interaction with EZR, MSN and RDX and for co-localization to microvilli. The Nuclear localization signal motif lies at 282–296 (KRRTGALVLSRGGKR). At serine 291 the chain carries Phosphoserine. Gly residues predominate over residues 320–332 (GGSGGDKGSGFPD). The segment at 320-400 (GGSGGDKGSG…EPEGGDGAAP (81 aa)) is disordered. Serine 336 bears the Phosphoserine mark. Threonine 341 carries the post-translational modification Phosphothreonine. A Phosphoserine modification is found at serine 351. Serine 355 is modified (phosphoserine; by PKC/PRKCQ). 2 positions are modified to phosphoserine: serine 368 and serine 379.

Interacts with SIGLEC1. In terms of assembly, monomer. Interacts with CTNNB1. Interacts with RDX (via FERM domain), EZR and MSN. Post-translationally, glycosylated; has a high content of sialic acid and O-linked carbohydrate structures. In terms of processing, phosphorylation at Ser-355 is regulated by chemokines, requires its association with ERM proteins (EZR, RDX and MSN) and is essential for its function in the regulation of T-cell trafficking to lymph nodes. Has a high content of sialic acid and O-linked carbohydrate structures. Post-translationally, cleavage by CTSG releases its extracellular domain and triggers its intramembrane proteolysis by gamma-secretase releasing the CD43 cytoplasmic tail chain (CD43-ct) which translocates to the nucleus. In terms of processing, sumoylated. Cell surface of thymocytes, T-lymphocytes, neutrophils, plasma cells and myelomas.

The protein resides in the membrane. The protein localises to the cell projection. It is found in the microvillus. It localises to the uropodium. Its subcellular location is the nucleus. The protein resides in the PML body. In terms of biological role, predominant cell surface sialoprotein of leukocytes which regulates multiple T-cell functions, including T-cell activation, proliferation, differentiation, trafficking and migration. Positively regulates T-cell trafficking to lymph-nodes via its association with ERM proteins (EZR, RDX and MSN). Negatively regulates Th2 cell differentiation and predisposes the differentiation of T-cells towards a Th1 lineage commitment. Promotes the expression of IFN-gamma by T-cells during T-cell receptor (TCR) activation of naive cells and induces the expression of IFN-gamma by CD4(+) T-cells and to a lesser extent by CD8(+) T-cells. Plays a role in preparing T-cells for cytokine sensing and differentiation into effector cells by inducing the expression of cytokine receptors IFNGR and IL4R, promoting IFNGR and IL4R signaling and by mediating the clustering of IFNGR with TCR. Acts as a major E-selectin ligand responsible for Th17 cell rolling on activated vasculature and recruitment during inflammation. Mediates Th17 cells, but not Th1 cells, adhesion to E-selectin. Acts as a T-cell counter-receptor for SIGLEC1. Its function is as follows. Protects cells from apoptotic signals, promoting cell survival. The protein is Leukosialin (SPN) of Homo sapiens (Human).